The sequence spans 341 residues: Aspartate--ammonia ligase (341 aa).

It belongs to the class-II aminoacyl-tRNA synthetase family. AsnA subfamily.

The protein resides in the cytoplasm. The enzyme catalyses L-aspartate + NH4(+) + ATP = L-asparagine + AMP + diphosphate + H(+). Its pathway is amino-acid biosynthesis; L-asparagine biosynthesis; L-asparagine from L-aspartate (ammonia route): step 1/1. This is Aspartate--ammonia ligase from Clostridium tetani (strain Massachusetts / E88).